We begin with the raw amino-acid sequence, 131 residues long: Rhodopsin (131 aa).

The Extracellular portion of the chain corresponds to 1-16; sequence CGIDYYTRAPGYNNES. The N-linked (GlcNAc...) asparagine glycan is linked to Asn-14. The chain crosses the membrane as a helical span at residues 17-38; that stretch reads FVIYMFIVHFLIPLFIISFCYG. Topologically, residues 39-66 are cytoplasmic; that stretch reads NLLCAVKAAAAAQEESETTQRAEREVTR. The helical transmembrane segment at 67–88 threads the bilayer; it reads MVIMMVISYLVSWVPYASVAWY. Topologically, residues 89–100 are extracellular; the sequence is IFSNQGSEFGPV. Residues 101–122 traverse the membrane as a helical segment; the sequence is FMTIPAFFAKSSALYNPLIYVL. N6-(retinylidene)lysine is present on Lys-110. Residues 123–131 lie on the Cytoplasmic side of the membrane; that stretch reads MNKQFRHCM.

It belongs to the G-protein coupled receptor 1 family. Opsin subfamily. Phosphorylated on some or all of the serine and threonine residues present in the C-terminal region. In terms of processing, contains one covalently linked retinal chromophore.

The protein localises to the membrane. Its subcellular location is the cell projection. The protein resides in the cilium. It localises to the photoreceptor outer segment. Functionally, photoreceptor required for image-forming vision at low light intensity. While most salt water fish species use retinal as chromophore, most freshwater fish use 3-dehydroretinal, or a mixture of retinal and 3-dehydroretinal. Light-induced isomerization of 11-cis to all-trans retinal triggers a conformational change that activates signaling via G-proteins. Subsequent receptor phosphorylation mediates displacement of the bound G-protein alpha subunit by arrestin and terminates signaling. This is Rhodopsin (rho) from Coregonus autumnalis (Arctic cisco).